The following is a 148-amino-acid chain: Cysteine-rich venom protein VAR6 (148 aa).

The N-terminal stretch at 1-22 (MILLKLYLTLAAILCQSRGTTS) is a signal peptide. Residues 41–140 (NKHNDLRRTV…AGVMVGHYTQ (100 aa)) form the SCP domain.

It belongs to the CRISP family. Post-translationally, contains 8 disulfide bonds. As to expression, expressed by the venom gland.

It localises to the secreted. Its function is as follows. Blocks ryanodine receptors, and potassium channels. The protein is Cysteine-rich venom protein VAR6 of Varanus acanthurus (Ridge-tailed monitor).